Consider the following 188-residue polypeptide: Adenine phosphoribosyltransferase (188 aa).

This sequence belongs to the purine/pyrimidine phosphoribosyltransferase family. Homodimer.

Its subcellular location is the cytoplasm. The catalysed reaction is AMP + diphosphate = 5-phospho-alpha-D-ribose 1-diphosphate + adenine. The protein operates within purine metabolism; AMP biosynthesis via salvage pathway; AMP from adenine: step 1/1. In terms of biological role, catalyzes a salvage reaction resulting in the formation of AMP, that is energically less costly than de novo synthesis. The chain is Adenine phosphoribosyltransferase from Burkholderia multivorans (strain ATCC 17616 / 249).